The following is a 292-amino-acid chain: ATP synthase gamma chain (292 aa).

This sequence belongs to the ATPase gamma chain family. F-type ATPases have 2 components, CF(1) - the catalytic core - and CF(0) - the membrane proton channel. CF(1) has five subunits: alpha(3), beta(3), gamma(1), delta(1), epsilon(1). CF(0) has three main subunits: a, b and c.

Its subcellular location is the cell inner membrane. In terms of biological role, produces ATP from ADP in the presence of a proton gradient across the membrane. The gamma chain is believed to be important in regulating ATPase activity and the flow of protons through the CF(0) complex. The sequence is that of ATP synthase gamma chain from Brucella canis (strain ATCC 23365 / NCTC 10854 / RM-666).